A 2079-amino-acid polypeptide reads, in one-letter code: von Willebrand factor A domain-containing protein DDB_G0286969 (2079 aa).

One can recognise a VIT domain in the interval 11 to 147 (EQILPSFISI…ELEIIITYST (137 aa)). The segment at 178-203 (NENSTTNTNTQTQPQSVNTTTTTTPS) is disordered. The span at 180 to 203 (NSTTNTNTQTQPQSVNTTTTTTPS) shows a compositional bias: low complexity. In terms of domain architecture, VWFA spans 354–525 (ELIFLVDVSE…KVMRQLKRAL (172 aa)). 5 disordered regions span residues 761–800 (PTTL…LKTP), 832–866 (PFVP…TEVK), 956–1139 (AKPV…TKPT), 1155–1203 (NEPA…VSST), and 1239–1294 (DSNT…ADAE). Composition is skewed to low complexity over residues 785-800 (TTQQ…LKTP), 841-866 (PTTT…TEVK), and 956-973 (AKPV…QQTK). Residues 923–957 (EMIKIAEAKAAAEQKAAAEQKAIADAKAAAEQAAK) adopt a coiled-coil conformation. Residues 974–989 (PKADKQSKQNAKDNKQ) are compositionally biased toward basic and acidic residues. Residues 992–1006 (KPVVVEQKPPVVTET) are compositionally biased toward low complexity. Residues 1007–1021 (KPTVATESATPTKPT) show a composition bias toward polar residues. Low complexity predominate over residues 1023–1061 (AQAAAAAAAAAQQAAQQAAATTPVKQQPTKQTTPNKSTP). A compositionally biased stretch (basic and acidic residues) spans 1092-1111 (KPVETKPVEQTKPVETKPVE). Residues 1176–1198 (NNNNNNNNNNNNNNNNNNNNNNN) show a composition bias toward low complexity. Residues 1239–1272 (DSNTKAPDSLKTTPIFSNGPQGISPSSGNGSNKS) are compositionally biased toward polar residues. The span at 1280 to 1292 (DRGGRGGRDRNAD) shows a compositional bias: basic and acidic residues. Positions 1317 to 1527 (LKKFKFNLNR…LDLIDLRANK (211 aa)) constitute an MIF4G domain. The interval 1530 to 1755 (PKNSTQTKTK…PAPVEPVKPK (226 aa)) is disordered. Basic and acidic residues-rich tracts occupy residues 1538–1550 (TKKD…ERFI), 1557–1599 (QKRE…RDAP), and 1621–1634 (NNRD…DRSG). Composition is skewed to low complexity over residues 1635–1659 (GKQS…LFGS) and 1688–1699 (SSSIPSIPNRSN). Over residues 1725-1740 (SNDRDSRGPSKPDNRK) the composition is skewed to basic and acidic residues. An MI domain is found at 1760 to 1882 (KIEDDISMTL…PLNYLEEAYA (123 aa)).

The protein is von Willebrand factor A domain-containing protein DDB_G0286969 of Dictyostelium discoideum (Social amoeba).